Here is an 843-residue protein sequence, read N- to C-terminus: Translation initiation factor IF-2 (843 aa).

The tract at residues 94 to 259 (QRSPEEIEAE…AHGFQSPTGP (166 aa)) is disordered. Over residues 96–135 (SPEEIEAERKREMDERRAVENAARQKAEEEAKRRAEEDAR) the composition is skewed to basic and acidic residues. A compositionally biased stretch (low complexity) spans 136-177 (NQPAAGQPASAPAQPVAAAEPVREAPAPAAAAPAPASAAPSA). 2 stretches are compositionally biased toward basic and acidic residues: residues 178–219 (DARK…EKAP) and 227–236 (TTDEESDSFR). Over residues 237–250 (RGGRGKSRLKKRNA) the composition is skewed to basic residues. The tr-type G domain maps to 343–512 (SRAPVVTVMG…LLQAEVLELK (170 aa)). Positions 352–359 (GHVDHGKT) are G1. 352 to 359 (GHVDHGKT) is a GTP binding site. Residues 377 to 381 (GITQH) are G2. The segment at 398-401 (DTPG) is G3. GTP contacts are provided by residues 398–402 (DTPGH) and 452–455 (NKID). The tract at residues 452–455 (NKID) is G4. Residues 488-490 (SAK) form a G5 region.

The protein belongs to the TRAFAC class translation factor GTPase superfamily. Classic translation factor GTPase family. IF-2 subfamily.

The protein resides in the cytoplasm. Functionally, one of the essential components for the initiation of protein synthesis. Protects formylmethionyl-tRNA from spontaneous hydrolysis and promotes its binding to the 30S ribosomal subunits. Also involved in the hydrolysis of GTP during the formation of the 70S ribosomal complex. This chain is Translation initiation factor IF-2, found in Pseudomonas savastanoi pv. phaseolicola (strain 1448A / Race 6) (Pseudomonas syringae pv. phaseolicola (strain 1448A / Race 6)).